The sequence spans 235 residues: DnaA regulatory inactivator Hda (235 aa).

It belongs to the DnaA family. HdA subfamily. As to quaternary structure, the active form seems to be an ADP-bound monomer. Forms the RIDA complex (regulatory inactivation of DnaA) of ATP-DnaA, ADP-Hda and the DNA-loaded beta sliding clamp (dnaN).

Its function is as follows. Mediates the interaction of DNA replication initiator protein DnaA with DNA polymerase subunit beta sliding clamp (dnaN). Stimulates hydrolysis of ATP-DnaA to ADP-DnaA, rendering DnaA inactive for reinitiation, a process called regulatory inhibition of DnaA or RIDA. In Yersinia pestis bv. Antiqua (strain Antiqua), this protein is DnaA regulatory inactivator Hda.